The sequence spans 511 residues: Chromosomal replication initiator protein DnaA (511 aa).

The domain I, interacts with DnaA modulators stretch occupies residues 1 to 87 (MSVELWQQCV…IGSKRSSAPR (87 aa)). The interval 87–174 (RAAPNAPLAA…QVEGALKHTS (88 aa)) is domain II. A disordered region spans residues 133–160 (VATHDEPSRDSFDPMAGASSQQAPARAE). Basic and acidic residues predominate over residues 134 to 144 (ATHDEPSRDSF). Residues 175–391 (YLNRTFTFEN…GALKRVIAHS (217 aa)) are domain III, AAA+ region. ATP-binding residues include Gly219, Gly221, Lys222, and Thr223. The segment at 392–511 (HFMGRDITIE…YKNLLRTLTT (120 aa)) is domain IV, binds dsDNA.

Belongs to the DnaA family. In terms of assembly, oligomerizes as a right-handed, spiral filament on DNA at oriC.

The protein resides in the cytoplasm. Plays an essential role in the initiation and regulation of chromosomal replication. ATP-DnaA binds to the origin of replication (oriC) to initiate formation of the DNA replication initiation complex once per cell cycle. Binds the DnaA box (a 9 base pair repeat at the origin) and separates the double-stranded (ds)DNA. Forms a right-handed helical filament on oriC DNA; dsDNA binds to the exterior of the filament while single-stranded (ss)DNA is stabiized in the filament's interior. The ATP-DnaA-oriC complex binds and stabilizes one strand of the AT-rich DNA unwinding element (DUE), permitting loading of DNA polymerase. After initiation quickly degrades to an ADP-DnaA complex that is not apt for DNA replication. Binds acidic phospholipids. The sequence is that of Chromosomal replication initiator protein DnaA from Pseudomonas syringae pv. tomato (strain ATCC BAA-871 / DC3000).